A 458-amino-acid chain; its full sequence is UDP-N-acetylmuramoylalanine--D-glutamate ligase (458 aa).

124-130 contributes to the ATP binding site; it reads GSDGKTT.

Belongs to the MurCDEF family.

Its subcellular location is the cytoplasm. It carries out the reaction UDP-N-acetyl-alpha-D-muramoyl-L-alanine + D-glutamate + ATP = UDP-N-acetyl-alpha-D-muramoyl-L-alanyl-D-glutamate + ADP + phosphate + H(+). It participates in cell wall biogenesis; peptidoglycan biosynthesis. Cell wall formation. Catalyzes the addition of glutamate to the nucleotide precursor UDP-N-acetylmuramoyl-L-alanine (UMA). This is UDP-N-acetylmuramoylalanine--D-glutamate ligase from Clostridium beijerinckii (strain ATCC 51743 / NCIMB 8052) (Clostridium acetobutylicum).